We begin with the raw amino-acid sequence, 244 residues long: Aspartate/glutamate leucyltransferase (244 aa).

The protein belongs to the R-transferase family. Bpt subfamily.

The protein resides in the cytoplasm. The catalysed reaction is N-terminal L-glutamyl-[protein] + L-leucyl-tRNA(Leu) = N-terminal L-leucyl-L-glutamyl-[protein] + tRNA(Leu) + H(+). The enzyme catalyses N-terminal L-aspartyl-[protein] + L-leucyl-tRNA(Leu) = N-terminal L-leucyl-L-aspartyl-[protein] + tRNA(Leu) + H(+). Its function is as follows. Functions in the N-end rule pathway of protein degradation where it conjugates Leu from its aminoacyl-tRNA to the N-termini of proteins containing an N-terminal aspartate or glutamate. In Bordetella parapertussis (strain 12822 / ATCC BAA-587 / NCTC 13253), this protein is Aspartate/glutamate leucyltransferase.